Reading from the N-terminus, the 210-residue chain is MELHNIRDEYTKRVLSQHDCHKNPISQFEQWQKEAIHAQVNEPTAMNIATVDEQGRPNSRMVLLKEVNEQGFVFFTNYLSRKGGCIERNPYVALTFFWPELERQVRIEGKAVKIPAEQSDKYFATRPYTSRIGAWASEQSAVISNYKSLLAKAALVAAKHPLNVPRPDYWGGYLVVPETVEFWQGRPSRLHDRIRYRKESDNWIRERLSP.

Substrate contacts are provided by residues 7-10 (RDEY) and Lys-65. FMN is bound by residues 60 to 65 (RMVLLK), 75 to 76 (FT), Arg-81, Lys-82, and Gln-104. Residues Tyr-122, Arg-126, and Ser-130 each coordinate substrate. FMN-binding positions include 139–140 (QS) and Trp-183. 189-191 (RLH) provides a ligand contact to substrate. Residue Arg-193 participates in FMN binding.

Belongs to the pyridoxamine 5'-phosphate oxidase family. In terms of assembly, homodimer. The cofactor is FMN.

It catalyses the reaction pyridoxamine 5'-phosphate + O2 + H2O = pyridoxal 5'-phosphate + H2O2 + NH4(+). The catalysed reaction is pyridoxine 5'-phosphate + O2 = pyridoxal 5'-phosphate + H2O2. The protein operates within cofactor metabolism; pyridoxal 5'-phosphate salvage; pyridoxal 5'-phosphate from pyridoxamine 5'-phosphate: step 1/1. It participates in cofactor metabolism; pyridoxal 5'-phosphate salvage; pyridoxal 5'-phosphate from pyridoxine 5'-phosphate: step 1/1. In terms of biological role, catalyzes the oxidation of either pyridoxine 5'-phosphate (PNP) or pyridoxamine 5'-phosphate (PMP) into pyridoxal 5'-phosphate (PLP). This chain is Pyridoxine/pyridoxamine 5'-phosphate oxidase, found in Haemophilus influenzae (strain 86-028NP).